The sequence spans 58 residues: Small ribosomal subunit protein bS21 (58 aa).

A disordered region spans residues 39–58 (EKPSVKRKRKSEVARKRKKF). Residues 43–58 (VKRKRKSEVARKRKKF) are compositionally biased toward basic residues.

The protein belongs to the bacterial ribosomal protein bS21 family.

This Streptococcus pneumoniae (strain ATCC BAA-255 / R6) protein is Small ribosomal subunit protein bS21.